Here is a 275-residue protein sequence, read N- to C-terminus: Hydroxyethylthiazole kinase (275 aa).

Met-50 provides a ligand contact to substrate. Residues Arg-126 and Ser-171 each coordinate ATP. A substrate-binding site is contributed by Ala-200.

This sequence belongs to the Thz kinase family. Mg(2+) serves as cofactor.

It carries out the reaction 5-(2-hydroxyethyl)-4-methylthiazole + ATP = 4-methyl-5-(2-phosphooxyethyl)-thiazole + ADP + H(+). It participates in cofactor biosynthesis; thiamine diphosphate biosynthesis; 4-methyl-5-(2-phosphoethyl)-thiazole from 5-(2-hydroxyethyl)-4-methylthiazole: step 1/1. Its function is as follows. Catalyzes the phosphorylation of the hydroxyl group of 4-methyl-5-beta-hydroxyethylthiazole (THZ). The polypeptide is Hydroxyethylthiazole kinase (Acinetobacter baumannii (strain ACICU)).